Here is a 302-residue protein sequence, read N- to C-terminus: UDP-N-acetylenolpyruvoylglucosamine reductase (302 aa).

Residues 30–196 (IGGPADLFVE…IAATLEMKKG (167 aa)) form the FAD-binding PCMH-type domain. Arg174 is an active-site residue. Residue Ser225 is the Proton donor of the active site. Glu295 is an active-site residue.

Belongs to the MurB family. It depends on FAD as a cofactor.

Its subcellular location is the cytoplasm. It catalyses the reaction UDP-N-acetyl-alpha-D-muramate + NADP(+) = UDP-N-acetyl-3-O-(1-carboxyvinyl)-alpha-D-glucosamine + NADPH + H(+). It functions in the pathway cell wall biogenesis; peptidoglycan biosynthesis. In terms of biological role, cell wall formation. This is UDP-N-acetylenolpyruvoylglucosamine reductase from Anoxybacillus flavithermus (strain DSM 21510 / WK1).